A 305-amino-acid chain; its full sequence is Endonuclease III-like protein 1 (305 aa).

The transit peptide at 1 to 28 (MNAAGVRMVVTRARSRGTGASLRRRGEK) directs the protein to the mitochondrion. The segment at 1-83 (MNAAGVRMVV…HLQAPSWQPQ (83 aa)) is disordered. S64 carries the phosphoserine modification. The HhH domain maps to 192–216 (RYDGDIPASVAELVALPGVGPKMAH). K213 functions as the Nucleophile; for N-glycosylase activity in the catalytic mechanism. The [4Fe-4S] cluster site is built by C283, C290, C293, and C299.

Belongs to the Nth/MutY family. As to quaternary structure, interacts with YBX1. Interacts with ERCC5/XPG; the interaction stimulates NTHL1 activity and NTHL1 binding to its DNA substrate. [4Fe-4S] cluster serves as cofactor.

The protein resides in the nucleus. The protein localises to the mitochondrion. It catalyses the reaction 2'-deoxyribonucleotide-(2'-deoxyribose 5'-phosphate)-2'-deoxyribonucleotide-DNA = a 3'-end 2'-deoxyribonucleotide-(2,3-dehydro-2,3-deoxyribose 5'-phosphate)-DNA + a 5'-end 5'-phospho-2'-deoxyribonucleoside-DNA + H(+). In terms of biological role, bifunctional DNA N-glycosylase with associated apurinic/apyrimidinic (AP) lyase function that catalyzes the first step in base excision repair (BER), the primary repair pathway for the repair of oxidative DNA damage. The DNA N-glycosylase activity releases the damaged DNA base from DNA by cleaving the N-glycosidic bond, leaving an AP site. The AP lyase activity cleaves the phosphodiester bond 3' to the AP site by a beta-elimination. Primarily recognizes and repairs oxidative base damage of pyrimidines. In Bos taurus (Bovine), this protein is Endonuclease III-like protein 1.